The following is a 160-amino-acid chain: Ribosomal RNA large subunit methyltransferase H (160 aa).

Residues Leu-76, Gly-108, and 127–132 (LGKMTW) each bind S-adenosyl-L-methionine.

The protein belongs to the RNA methyltransferase RlmH family. In terms of assembly, homodimer.

It localises to the cytoplasm. It carries out the reaction pseudouridine(1915) in 23S rRNA + S-adenosyl-L-methionine = N(3)-methylpseudouridine(1915) in 23S rRNA + S-adenosyl-L-homocysteine + H(+). Its function is as follows. Specifically methylates the pseudouridine at position 1915 (m3Psi1915) in 23S rRNA. The sequence is that of Ribosomal RNA large subunit methyltransferase H from Sinorhizobium fredii (strain NBRC 101917 / NGR234).